Consider the following 386-residue polypeptide: Myosin light chain kinase family member 4 (386 aa).

At Ser100 the chain carries Phosphoserine. One can recognise a Protein kinase domain in the interval 107–361; that stretch reads VSKSEILGGG…ASEALKHPWL (255 aa). ATP is bound by residues 113-121 and Lys136; that span reads LGGGRFGQV. Asp227 functions as the Proton acceptor in the catalytic mechanism.

Belongs to the protein kinase superfamily. CAMK Ser/Thr protein kinase family.

It catalyses the reaction L-seryl-[protein] + ATP = O-phospho-L-seryl-[protein] + ADP + H(+). It carries out the reaction L-threonyl-[protein] + ATP = O-phospho-L-threonyl-[protein] + ADP + H(+). The sequence is that of Myosin light chain kinase family member 4 (Mylk4) from Mus musculus (Mouse).